We begin with the raw amino-acid sequence, 142 residues long: MATYMANAKTVSPRWLLVNAEGKTLGRLASRIAAILRGKHKAEFTPHVDAGDFVVVINVDKLKVTGNKTQDKQYHHHSGYPGGLKTINFADLQAKKPQRILELAIKGMLPKGPLGRQLYRKLKIYAGDQHPHQAQQPELIDL.

The protein belongs to the universal ribosomal protein uL13 family. In terms of assembly, part of the 50S ribosomal subunit.

Functionally, this protein is one of the early assembly proteins of the 50S ribosomal subunit, although it is not seen to bind rRNA by itself. It is important during the early stages of 50S assembly. The polypeptide is Large ribosomal subunit protein uL13 (Coxiella burnetii (strain CbuK_Q154) (Coxiella burnetii (strain Q154))).